The chain runs to 391 residues: Toluene efflux pump periplasmic linker protein TtgG (391 aa).

Positions 1–32 (MRAERWSQTVRQIRSPRALRVIPLTALMLISG) are cleaved as a signal peptide. The N-palmitoyl cysteine moiety is linked to residue cysteine 33. A lipid anchor (S-diacylglycerol cysteine) is attached at cysteine 33. Positions 107-136 (RTYEAQLRRAEANRTSAQNLARRYETLLKT) form a coiled coil.

This sequence belongs to the membrane fusion protein (MFP) (TC 8.A.1) family.

The protein resides in the cell inner membrane. Its function is as follows. The periplasmic linker component of an organic solvent efflux pump. Involved in export of a number of organic solvents, including toluene and styrene. This is the most important solvent efflux pump in this strain, although it can export AMP and some antibiotics. In Pseudomonas putida (strain DOT-T1E), this protein is Toluene efflux pump periplasmic linker protein TtgG (ttgG).